The following is a 492-amino-acid chain: Adenylyltransferase and sulfurtransferase uba4 (492 aa).

ATP-binding positions include G99, D120, 127 to 131 (SNLHR), K144, and 188 to 189 (DN). Residues C237 and C240 each contribute to the Zn(2+) site. The active-site Glycyl thioester intermediate; for adenylyltransferase activity is C254. Residues C317 and C320 each coordinate Zn(2+). The Rhodanese domain occupies 378 to 490 (GSKEPTIIDV…WREQIDPDWP (113 aa)). C445 acts as the Cysteine persulfide intermediate; for sulfurtransferase activity in catalysis.

The protein in the N-terminal section; belongs to the HesA/MoeB/ThiF family. UBA4 subfamily. The cofactor is Zn(2+).

It is found in the cytoplasm. The protein resides in the cytosol. The catalysed reaction is [molybdopterin-synthase sulfur-carrier protein]-C-terminal Gly-Gly + ATP + H(+) = [molybdopterin-synthase sulfur-carrier protein]-C-terminal Gly-Gly-AMP + diphosphate. It carries out the reaction [molybdopterin-synthase sulfur-carrier protein]-C-terminal Gly-Gly-AMP + S-sulfanyl-L-cysteinyl-[cysteine desulfurase] + AH2 = [molybdopterin-synthase sulfur-carrier protein]-C-terminal-Gly-aminoethanethioate + L-cysteinyl-[cysteine desulfurase] + A + AMP + 2 H(+). It participates in tRNA modification; 5-methoxycarbonylmethyl-2-thiouridine-tRNA biosynthesis. It functions in the pathway cofactor biosynthesis; molybdopterin biosynthesis. Functionally, plays a central role in 2-thiolation of mcm(5)S(2)U at tRNA wobble positions of cytosolic tRNA(Lys), tRNA(Glu) and tRNA(Gln). Also essential during biosynthesis of the molybdenum cofactor. Acts by mediating the C-terminal thiocarboxylation of sulfur carriers urm1 and mocs2a. Its N-terminus first activates urm1 and mocs2a as acyl-adenylates (-COAMP), then the persulfide sulfur on the catalytic cysteine is transferred to urm1 and mocs2a to form thiocarboxylation (-COSH) of their C-terminus. The reaction probably involves hydrogen sulfide that is generated from the persulfide intermediate and that acts as a nucleophile towards urm1 and mocs2a. Subsequently, a transient disulfide bond is formed. Does not use thiosulfate as sulfur donor; nfs1 probably acting as a sulfur donor for thiocarboxylation reactions. The sequence is that of Adenylyltransferase and sulfurtransferase uba4 from Aspergillus clavatus (strain ATCC 1007 / CBS 513.65 / DSM 816 / NCTC 3887 / NRRL 1 / QM 1276 / 107).